Here is a 39-residue protein sequence, read N- to C-terminus: Contryphan-Cal1 (39 aa).

Residues 1–20 (MTRTAVLLLTLLFLVAMAAS) form the signal peptide. An intrachain disulfide couples Cys-29 to Cys-35.

As to expression, expressed by the venom duct.

The protein localises to the secreted. Probable neurotoxin. The polypeptide is Contryphan-Cal1 (Californiconus californicus (California cone)).